Reading from the N-terminus, the 255-residue chain is Aliphatic sulfonates import ATP-binding protein SsuB (255 aa).

Positions 7 to 231 (IKEKAFVQEG…PRNRTTPDFQ (225 aa)) constitute an ABC transporter domain. Residue 39 to 46 (GPSGCGKS) participates in ATP binding.

It belongs to the ABC transporter superfamily. Aliphatic sulfonates importer (TC 3.A.1.17.2) family. In terms of assembly, the complex is composed of two ATP-binding proteins (SsuB), two transmembrane proteins (SsuC) and a solute-binding protein (SsuA).

Its subcellular location is the cell membrane. The catalysed reaction is ATP + H2O + aliphatic sulfonate-[sulfonate-binding protein]Side 1 = ADP + phosphate + aliphatic sulfonateSide 2 + [sulfonate-binding protein]Side 1.. Part of the ABC transporter complex SsuABC involved in aliphatic sulfonates import. Responsible for energy coupling to the transport system. Is also involved in taurine transport. The polypeptide is Aliphatic sulfonates import ATP-binding protein SsuB (Bacillus subtilis (strain 168)).